A 496-amino-acid chain; its full sequence is Palmitoleoyl-protein carboxylesterase NOTUM (496 aa).

The first 19 residues, 1-19, serve as a signal peptide directing secretion; the sequence is MGRGVRVLLLLSLLHCAGG. The tract at residues 21 to 46 is disordered; that stretch reads EGRKTWRRRGQQPPPPPRTEAAPAAG. Serine 81 carries the phosphoserine; by FAM20C modification. Residue asparagine 96 is glycosylated (N-linked (GlcNAc...) asparagine). Catalysis depends on charge relay system residues serine 232, aspartate 340, and histidine 389.

The protein belongs to the pectinacetylesterase family. Notum subfamily. Rarely expressed in adult normal tissues.

Its subcellular location is the secreted. It carries out the reaction [Wnt protein]-O-(9Z)-hexadecenoyl-L-serine + H2O = [Wnt protein]-L-serine + (9Z)-hexadecenoate + H(+). Carboxylesterase that acts as a key negative regulator of the Wnt signaling pathway by specifically mediating depalmitoleoylation of WNT proteins. Serine palmitoleoylation of WNT proteins is required for efficient binding to frizzled receptors. The protein is Palmitoleoyl-protein carboxylesterase NOTUM of Homo sapiens (Human).